Here is a 691-residue protein sequence, read N- to C-terminus: Protein phosphatase 1 regulatory subunit 37 (691 aa).

Positions methionine 1 to alanine 43 are disordered. Serine 50 and serine 56 each carry phosphoserine. LRR repeat units lie at residues serine 220–alanine 240, asparagine 248–glycine 269, serine 277–cysteine 297, glycine 306–glycine 326, and serine 334–lysine 354. Residues glutamate 460–leucine 662 form a disordered region. Over residues proline 468–glutamate 481 the composition is skewed to polar residues. The segment covering serine 505–arginine 523 has biased composition (acidic residues). At serine 561 the chain carries Phosphoserine. Pro residues-rich tracts occupy residues proline 584–proline 605 and proline 620–proline 634.

This sequence belongs to the PPP1R37 family. As to quaternary structure, interacts with PPP1CA.

Functionally, inhibits phosphatase activity of protein phosphatase 1 (PP1) complexes. This Homo sapiens (Human) protein is Protein phosphatase 1 regulatory subunit 37 (PPP1R37).